Consider the following 137-residue polypeptide: Acidic phospholipase A2 PL-I (137 aa).

An N-terminal signal peptide occupies residues 1–17 (AVCVSLLGASSIRPLPL). 7 cysteine pairs are disulfide-bonded: cysteine 28-cysteine 89, cysteine 44-cysteine 136, cysteine 46-cysteine 62, cysteine 61-cysteine 117, cysteine 68-cysteine 110, cysteine 78-cysteine 103, and cysteine 96-cysteine 108. Tyrosine 45, glycine 47, and glycine 49 together coordinate Ca(2+). The active site involves histidine 65. Residue aspartate 66 participates in Ca(2+) binding. Residue aspartate 111 is part of the active site.

It depends on Ca(2+) as a cofactor. Expressed by the venom gland.

It localises to the secreted. It carries out the reaction a 1,2-diacyl-sn-glycero-3-phosphocholine + H2O = a 1-acyl-sn-glycero-3-phosphocholine + a fatty acid + H(+). Functionally, snake venom phospholipase A2 (PLA2) that may act in the hemostasis system of the prey. Exhibits hydrolytic activities, and prefers the anionic micelles (dPPC with deoxycholate) (793 umol/mg/min) to the zwitterionic micelles (dPPC with Triton X-100) (591 umol/mg/min). PLA2 catalyzes the calcium-dependent hydrolysis of the 2-acyl groups in 3-sn-phosphoglycerides. This Walterinnesia aegyptia (Desert black snake) protein is Acidic phospholipase A2 PL-I.